Reading from the N-terminus, the 576-residue chain is MSEEAAYQEDTAVQNTPADALSPVESDSNSALSTPSNKAERDDMKDFDENHEESNNYVEIPKKPASAYVTVSICCLMVAFGGFVFGWDTGTISGFVAQTDFIRRFGMKHHDGTYYLSKVRTGLIVSIFNIGCAIGGIILAKLGDMYGRKMGLIVVVVIYIIGIIIQIASINKWYQYFIGRIISGLGVGGIAVLSPMLISEVSPKHIRGTLVSCYQLMITLGIFLGYCTNYGTKTYTNSVQWRVPLGLGFAWALFMIGGMTFVPESPRYLVEVGKIEEAKRSIALSNKVSADDPAVMAEVEVVQATVEAEKLAGNASWGEIFSTKTKVFQRLIMGAMIQSLQQLTGDNYFFYYGTTVFTAVGLEDSFETSIVLGIVNFASTFVGIFLVERYGRRRCLLWGAASMTACMVVFASVGVTRLWPNGKKNGSSKGAGNCMIVFTCFYLFCFATTWAPIPFVVNSETFPLRVKSKCMAIAQACNWIWGFLIGFFTPFISGAIDFYYGYVFMGCLVFSYFYVFFFVPETKGLTLEEVNTLWEEGVLPWKSPSWVPPNKRGTDYNADDLMHDDQPFYKKMFGKK.

Residues 1–56 (MSEEAAYQEDTAVQNTPADALSPVESDSNSALSTPSNKAERDDMKDFDENHEESNN) form a disordered region. At 1–66 (MSEEAAYQED…YVEIPKKPAS (66 aa)) the chain is on the cytoplasmic side. Residues 25-37 (ESDSNSALSTPSN) show a composition bias toward polar residues. The segment covering 38-54 (KAERDDMKDFDENHEES) has biased composition (basic and acidic residues). Residue Lys-45 forms a Glycyl lysine isopeptide (Lys-Gly) (interchain with G-Cter in ubiquitin) linkage. Residues 67–87 (AYVTVSICCLMVAFGGFVFGW) form a helical membrane-spanning segment. Residues 88–122 (DTGTISGFVAQTDFIRRFGMKHHDGTYYLSKVRTG) lie on the Extracellular side of the membrane. A helical transmembrane segment spans residues 123 to 143 (LIVSIFNIGCAIGGIILAKLG). Topologically, residues 144 to 149 (DMYGRK) are cytoplasmic. Residues 150-170 (MGLIVVVVIYIIGIIIQIASI) traverse the membrane as a helical segment. Topologically, residues 171-180 (NKWYQYFIGR) are extracellular. The chain crosses the membrane as a helical span at residues 181–201 (IISGLGVGGIAVLSPMLISEV). Residues 202–207 (SPKHIR) are Cytoplasmic-facing. A helical transmembrane segment spans residues 208–228 (GTLVSCYQLMITLGIFLGYCT). The Extracellular portion of the chain corresponds to 229 to 242 (NYGTKTYTNSVQWR). A helical membrane pass occupies residues 243–263 (VPLGLGFAWALFMIGGMTFVP). The Cytoplasmic portion of the chain corresponds to 264–346 (ESPRYLVEVG…IQSLQQLTGD (83 aa)). The chain crosses the membrane as a helical span at residues 347–363 (NYFFYYGTTVFTAVGLE). Over 364 to 369 (DSFETS) the chain is Extracellular. The helical transmembrane segment at 370–387 (IVLGIVNFASTFVGIFLV) threads the bilayer. Topologically, residues 388–394 (ERYGRRR) are cytoplasmic. A helical membrane pass occupies residues 395-415 (CLLWGAASMTACMVVFASVGV). Residues 416-437 (TRLWPNGKKNGSSKGAGNCMIV) are Extracellular-facing. N-linked (GlcNAc...) asparagine glycosylation is present at Asn-425. The helical transmembrane segment at 438-458 (FTCFYLFCFATTWAPIPFVVN) threads the bilayer. The Cytoplasmic portion of the chain corresponds to 459-475 (SETFPLRVKSKCMAIAQ). A helical transmembrane segment spans residues 476-496 (ACNWIWGFLIGFFTPFISGAI). Asp-497 is a topological domain (extracellular). Residues 498-518 (FYYGYVFMGCLVFSYFYVFFF) traverse the membrane as a helical segment. The Cytoplasmic portion of the chain corresponds to 519-576 (VPETKGLTLEEVNTLWEEGVLPWKSPSWVPPNKRGTDYNADDLMHDDQPFYKKMFGKK).

The protein belongs to the major facilitator superfamily. Sugar transporter (TC 2.A.1.1) family.

The protein resides in the cell membrane. With respect to regulation, xylose uptake is strongly inhibited by glucose. Its function is as follows. Low-affinity glucose transporter. Can also transport xylose. This Saccharomyces cerevisiae (strain ATCC 204508 / S288c) (Baker's yeast) protein is Low-affinity glucose transporter HXT4 (HXT4).